Here is a 251-residue protein sequence, read N- to C-terminus: Triosephosphate isomerase (251 aa).

12–14 (NWK) provides a ligand contact to substrate. His-98 serves as the catalytic Electrophile. Glu-168 acts as the Proton acceptor in catalysis. Substrate contacts are provided by residues Gly-174, Ser-213, and 234-235 (GG).

It belongs to the triosephosphate isomerase family. As to quaternary structure, homodimer.

It localises to the cytoplasm. It catalyses the reaction D-glyceraldehyde 3-phosphate = dihydroxyacetone phosphate. Its pathway is carbohydrate biosynthesis; gluconeogenesis. It functions in the pathway carbohydrate degradation; glycolysis; D-glyceraldehyde 3-phosphate from glycerone phosphate: step 1/1. Involved in the gluconeogenesis. Catalyzes stereospecifically the conversion of dihydroxyacetone phosphate (DHAP) to D-glyceraldehyde-3-phosphate (G3P). The chain is Triosephosphate isomerase from Afipia carboxidovorans (strain ATCC 49405 / DSM 1227 / KCTC 32145 / OM5) (Oligotropha carboxidovorans).